The following is a 566-amino-acid chain: Arginine--tRNA ligase (566 aa).

A 'HIGH' region motif is present at residues 121 to 131 (ANPNGPFHIGH).

Belongs to the class-I aminoacyl-tRNA synthetase family.

Its subcellular location is the cytoplasm. The catalysed reaction is tRNA(Arg) + L-arginine + ATP = L-arginyl-tRNA(Arg) + AMP + diphosphate. This Methanococcus maripaludis (strain C7 / ATCC BAA-1331) protein is Arginine--tRNA ligase.